A 144-amino-acid polypeptide reads, in one-letter code: Large ribosomal subunit protein uL15 (144 aa).

Residues 1 to 52 (MRLNTLSPANGARHSRKRLGRGIGSGFGKTSGRGHKGQKSRSGSSIRRGFEG) form a disordered region. The span at 21–31 (RGIGSGFGKTS) shows a compositional bias: gly residues.

It belongs to the universal ribosomal protein uL15 family. In terms of assembly, part of the 50S ribosomal subunit.

In terms of biological role, binds to the 23S rRNA. The polypeptide is Large ribosomal subunit protein uL15 (Buchnera aphidicola subsp. Acyrthosiphon pisum (strain 5A)).